A 620-amino-acid polypeptide reads, in one-letter code: 1-deoxy-D-xylulose-5-phosphate synthase (620 aa).

Residues His80 and 121 to 123 (GHS) each bind thiamine diphosphate. Mg(2+) is bound at residue Asp152. Residues 153–154 (GA), Asn181, Tyr288, and Glu370 each bind thiamine diphosphate. Asn181 contacts Mg(2+).

It belongs to the transketolase family. DXPS subfamily. In terms of assembly, homodimer. It depends on Mg(2+) as a cofactor. Requires thiamine diphosphate as cofactor.

It carries out the reaction D-glyceraldehyde 3-phosphate + pyruvate + H(+) = 1-deoxy-D-xylulose 5-phosphate + CO2. It functions in the pathway metabolic intermediate biosynthesis; 1-deoxy-D-xylulose 5-phosphate biosynthesis; 1-deoxy-D-xylulose 5-phosphate from D-glyceraldehyde 3-phosphate and pyruvate: step 1/1. Its function is as follows. Catalyzes the acyloin condensation reaction between C atoms 2 and 3 of pyruvate and glyceraldehyde 3-phosphate to yield 1-deoxy-D-xylulose-5-phosphate (DXP). In Pseudoalteromonas translucida (strain TAC 125), this protein is 1-deoxy-D-xylulose-5-phosphate synthase.